The following is a 349-amino-acid chain: S-adenosylmethionine decarboxylase proenzyme 3 (349 aa).

Active-site residues include Glu9 and Glu12. Glu68 contributes to the substrate binding site. Ser69 acts as the Schiff-base intermediate with substrate; via pyruvic acid in catalysis. Ser69 is subject to Pyruvic acid (Ser); by autocatalysis. Cys83 functions as the Proton donor; for catalytic activity in the catalytic mechanism. Residues Ser235 and His248 each act as proton acceptor; for processing activity in the active site. Residue Glu252 coordinates substrate.

The protein belongs to the eukaryotic AdoMetDC family. The cofactor is pyruvate. Post-translationally, is synthesized initially as an inactive proenzyme. Formation of the active enzyme involves a self-maturation process in which the active site pyruvoyl group is generated from an internal serine residue via an autocatalytic post-translational modification. Two non-identical subunits are generated from the proenzyme in this reaction, and the pyruvate is formed at the N-terminus of the alpha chain, which is derived from the carboxyl end of the proenzyme. The post-translation cleavage follows an unusual pathway, termed non-hydrolytic serinolysis, in which the side chain hydroxyl group of the serine supplies its oxygen atom to form the C-terminus of the beta chain, while the remainder of the serine residue undergoes an oxidative deamination to produce ammonia and the pyruvoyl group blocking the N-terminus of the alpha chain.

The enzyme catalyses S-adenosyl-L-methionine + H(+) = S-adenosyl 3-(methylsulfanyl)propylamine + CO2. It functions in the pathway amine and polyamine biosynthesis; S-adenosylmethioninamine biosynthesis; S-adenosylmethioninamine from S-adenosyl-L-methionine: step 1/1. In terms of biological role, essential for biosynthesis of the polyamines spermidine and spermine. Essential for polyamine homeostasis, and normal plant embryogenesis, growth and development. The sequence is that of S-adenosylmethionine decarboxylase proenzyme 3 from Arabidopsis thaliana (Mouse-ear cress).